Reading from the N-terminus, the 229-residue chain is 7-cyano-7-deazaguanine synthase (229 aa).

Residue leucine 7 to leucine 17 participates in ATP binding. The Zn(2+) site is built by cysteine 191, cysteine 204, cysteine 207, and cysteine 210.

This sequence belongs to the QueC family. It depends on Zn(2+) as a cofactor.

It carries out the reaction 7-carboxy-7-deazaguanine + NH4(+) + ATP = 7-cyano-7-deazaguanine + ADP + phosphate + H2O + H(+). The protein operates within purine metabolism; 7-cyano-7-deazaguanine biosynthesis. Functionally, catalyzes the ATP-dependent conversion of 7-carboxy-7-deazaguanine (CDG) to 7-cyano-7-deazaguanine (preQ(0)). The sequence is that of 7-cyano-7-deazaguanine synthase from Cyanothece sp. (strain PCC 7425 / ATCC 29141).